A 363-amino-acid polypeptide reads, in one-letter code: Aminomethyltransferase (363 aa).

The protein belongs to the GcvT family. In terms of assembly, the glycine cleavage system is composed of four proteins: P, T, L and H.

It catalyses the reaction N(6)-[(R)-S(8)-aminomethyldihydrolipoyl]-L-lysyl-[protein] + (6S)-5,6,7,8-tetrahydrofolate = N(6)-[(R)-dihydrolipoyl]-L-lysyl-[protein] + (6R)-5,10-methylene-5,6,7,8-tetrahydrofolate + NH4(+). The glycine cleavage system catalyzes the degradation of glycine. The chain is Aminomethyltransferase from Picosynechococcus sp. (strain ATCC 27264 / PCC 7002 / PR-6) (Agmenellum quadruplicatum).